We begin with the raw amino-acid sequence, 190 residues long: MSGDNQLGRLVILAGPSAVGKSTVVDRLRNDVPNLYFSVSMTTRAPRPGEVDGRDYFYVTAQEFQDKIDCGEMLEWADIHGGLQRSGTPAGPVNEARQNGRPVLVEVDLAGARNIASLIPDAETIFLAPPSWEVLVERLTGRGTESEDVIARRLETAREELAAQSEFKHVIINDDVDTAVKAIEDVLLGA.

The Guanylate kinase-like domain occupies 8–188 (GRLVILAGPS…AVKAIEDVLL (181 aa)). 15-22 (GPSAVGKS) contributes to the ATP binding site.

The protein belongs to the guanylate kinase family.

It localises to the cytoplasm. The enzyme catalyses GMP + ATP = GDP + ADP. Its function is as follows. Essential for recycling GMP and indirectly, cGMP. This is Guanylate kinase from Corynebacterium glutamicum (strain ATCC 13032 / DSM 20300 / JCM 1318 / BCRC 11384 / CCUG 27702 / LMG 3730 / NBRC 12168 / NCIMB 10025 / NRRL B-2784 / 534).